The chain runs to 342 residues: Ferrochelatase (342 aa).

Fe cation contacts are provided by His188 and Glu268.

The protein belongs to the ferrochelatase family.

It localises to the cytoplasm. It carries out the reaction heme b + 2 H(+) = protoporphyrin IX + Fe(2+). It functions in the pathway porphyrin-containing compound metabolism; protoheme biosynthesis; protoheme from protoporphyrin-IX: step 1/1. Catalyzes the ferrous insertion into protoporphyrin IX. In Rickettsia prowazekii (strain Madrid E), this protein is Ferrochelatase.